A 319-amino-acid chain; its full sequence is Sulfate adenylyltransferase subunit 2 (319 aa).

It belongs to the PAPS reductase family. CysD subfamily. Heterodimer composed of CysD, the smaller subunit, and CysN.

The catalysed reaction is sulfate + ATP + H(+) = adenosine 5'-phosphosulfate + diphosphate. The protein operates within sulfur metabolism; hydrogen sulfide biosynthesis; sulfite from sulfate: step 1/3. Functionally, with CysN forms the ATP sulfurylase (ATPS) that catalyzes the adenylation of sulfate producing adenosine 5'-phosphosulfate (APS) and diphosphate, the first enzymatic step in sulfur assimilation pathway. APS synthesis involves the formation of a high-energy phosphoric-sulfuric acid anhydride bond driven by GTP hydrolysis by CysN coupled to ATP hydrolysis by CysD. The chain is Sulfate adenylyltransferase subunit 2 from Methylobacterium radiotolerans (strain ATCC 27329 / DSM 1819 / JCM 2831 / NBRC 15690 / NCIMB 10815 / 0-1).